Reading from the N-terminus, the 410-residue chain is MANVVVTGEQLDKAIREVVHILEDAVGCTAGPKGLTVAISKPYGAPEITKDGYKVIKSIKPEDPLALAIANIIAQSASQCNDKVGDGTTTCSILTAKVIEEVSKAKAAGADIVCIKDGVLKAKEAVLDALMSMKREVLSEEEIAQVATISANGDKNIGVKIAQCVQEVGKDGVITVEESKGFKELDVEKTDGMQFDRGYLSPYFVTNSEKMLVEFENPYILLTEKKLNIIQPILPILENVARSGRPLLIIAEDVEGEALSTLVLNKLRGGLHVAAVKAPGFGDRRKDMLGDIAILTGAKHVISDDLAIKMEDLTLAELGTAKNIRITKDTTTIIGSVDNSSDNVQSRINQIKVQIESSTSDYDKEKLRERLAKLSGGVAVLKVGGSSEVEVKERKDRVEDALHATRAAVE.

Residues 29–32, Lys50, and 86–90 each bind ATP; these read TAGP and DGTTT.

This sequence belongs to the chaperonin (HSP60) family. Forms a cylinder of 14 subunits composed of two heptameric rings stacked back-to-back. Interacts with the co-chaperonin GroES.

The protein localises to the cytoplasm. The catalysed reaction is ATP + H2O + a folded polypeptide = ADP + phosphate + an unfolded polypeptide.. Together with its co-chaperonin GroES, plays an essential role in assisting protein folding. The GroEL-GroES system forms a nano-cage that allows encapsulation of the non-native substrate proteins and provides a physical environment optimized to promote and accelerate protein folding. The chain is Chaperonin GroEL from Ehrlichia canis.